A 261-amino-acid polypeptide reads, in one-letter code: Glutathione S-transferase theta-1 (261 aa).

In terms of domain architecture, GST N-terminal spans 2-101 (GLELYLDLLS…YLSRKYNTPD (100 aa)). Residues 72 to 73 (KV) and 85 to 86 (EC) each bind glutathione. The GST C-terminal domain maps to 107-248 (DIKKRAQVDE…LSNIQIDPQL (142 aa)).

This sequence belongs to the GST superfamily. Theta family. As to quaternary structure, homodimer.

The protein localises to the cytoplasm. The enzyme catalyses RX + glutathione = an S-substituted glutathione + a halide anion + H(+). Its function is as follows. Conjugation of reduced glutathione to a wide number of exogenous and endogenous hydrophobic electrophiles. The protein is Glutathione S-transferase theta-1 (GSTT1) of Gallus gallus (Chicken).